Reading from the N-terminus, the 653-residue chain is Chromosomal replication initiator protein DnaA (653 aa).

The tract at residues 1 to 100 (MADVPADLAA…SAGEPPASAS (100 aa)) is domain I, interacts with DnaA modulators. Positions 86-310 (ITVDDSAGEP…PAPATGPGEP (225 aa)) are disordered. The domain II stretch occupies residues 101–312 (PAPPRYEEPE…PATGPGEPTA (212 aa)). Composition is skewed to basic and acidic residues over residues 120–150 (DPYE…DRHQ) and 221–267 (PSYD…RRNI). The span at 284-310 (GSALPASSGAPGPLAAQPAPATGPGEP) shows a compositional bias: low complexity. The segment at 313 to 529 (RLNPKYLFDT…GALIRVTAFA (217 aa)) is domain III, AAA+ region. ATP-binding residues include glycine 357, glycine 359, lysine 360, and threonine 361. The interval 530 to 653 (SLNRQPVDLG…TELTNRIKNG (124 aa)) is domain IV, binds dsDNA.

Belongs to the DnaA family. As to quaternary structure, oligomerizes as a right-handed, spiral filament on DNA at oriC.

It localises to the cytoplasm. Its function is as follows. Plays an essential role in the initiation and regulation of chromosomal replication. ATP-DnaA binds to the origin of replication (oriC) to initiate formation of the DNA replication initiation complex once per cell cycle. Binds the DnaA box (a 9 base pair repeat at the origin) and separates the double-stranded (ds)DNA. Forms a right-handed helical filament on oriC DNA; dsDNA binds to the exterior of the filament while single-stranded (ss)DNA is stabiized in the filament's interior. The ATP-DnaA-oriC complex binds and stabilizes one strand of the AT-rich DNA unwinding element (DUE), permitting loading of DNA polymerase. After initiation quickly degrades to an ADP-DnaA complex that is not apt for DNA replication. Binds acidic phospholipids. The chain is Chromosomal replication initiator protein DnaA from Streptomyces avermitilis (strain ATCC 31267 / DSM 46492 / JCM 5070 / NBRC 14893 / NCIMB 12804 / NRRL 8165 / MA-4680).